Here is a 314-residue protein sequence, read N- to C-terminus: DNA-directed RNA polymerase subunit alpha (314 aa).

Residues 1 to 227 are alpha N-terminal domain (alpha-NTD); sequence MIEFQKPTIS…EHLALFIDLS (227 aa). The interval 241-314 is alpha C-terminal domain (alpha-CTD); it reads VETVMENKEP…GQSFKQETEN (74 aa).

It belongs to the RNA polymerase alpha chain family. In terms of assembly, homodimer. The RNAP catalytic core consists of 2 alpha, 1 beta, 1 beta' and 1 omega subunit. When a sigma factor is associated with the core the holoenzyme is formed, which can initiate transcription.

It catalyses the reaction RNA(n) + a ribonucleoside 5'-triphosphate = RNA(n+1) + diphosphate. Its function is as follows. DNA-dependent RNA polymerase catalyzes the transcription of DNA into RNA using the four ribonucleoside triphosphates as substrates. The sequence is that of DNA-directed RNA polymerase subunit alpha from Oenococcus oeni (strain ATCC BAA-331 / PSU-1).